A 376-amino-acid polypeptide reads, in one-letter code: Queuine tRNA-ribosyltransferase (376 aa).

D90 serves as the catalytic Proton acceptor. Substrate contacts are provided by residues 90–94 (DSGGF), D144, Q193, and G220. The tract at residues 251 to 257 (GVGTPED) is RNA binding. D270 acts as the Nucleophile in catalysis. Residues 275-279 (TRNAR) are RNA binding; important for wobble base 34 recognition. Positions 308, 310, 313, and 339 each coordinate Zn(2+).

The protein belongs to the queuine tRNA-ribosyltransferase family. As to quaternary structure, homodimer. Within each dimer, one monomer is responsible for RNA recognition and catalysis, while the other monomer binds to the replacement base PreQ1. Zn(2+) serves as cofactor.

The catalysed reaction is 7-aminomethyl-7-carbaguanine + guanosine(34) in tRNA = 7-aminomethyl-7-carbaguanosine(34) in tRNA + guanine. The protein operates within tRNA modification; tRNA-queuosine biosynthesis. In terms of biological role, catalyzes the base-exchange of a guanine (G) residue with the queuine precursor 7-aminomethyl-7-deazaguanine (PreQ1) at position 34 (anticodon wobble position) in tRNAs with GU(N) anticodons (tRNA-Asp, -Asn, -His and -Tyr). Catalysis occurs through a double-displacement mechanism. The nucleophile active site attacks the C1' of nucleotide 34 to detach the guanine base from the RNA, forming a covalent enzyme-RNA intermediate. The proton acceptor active site deprotonates the incoming PreQ1, allowing a nucleophilic attack on the C1' of the ribose to form the product. After dissociation, two additional enzymatic reactions on the tRNA convert PreQ1 to queuine (Q), resulting in the hypermodified nucleoside queuosine (7-(((4,5-cis-dihydroxy-2-cyclopenten-1-yl)amino)methyl)-7-deazaguanosine). In Cupriavidus necator (strain ATCC 17699 / DSM 428 / KCTC 22496 / NCIMB 10442 / H16 / Stanier 337) (Ralstonia eutropha), this protein is Queuine tRNA-ribosyltransferase.